The following is a 440-amino-acid chain: 23S rRNA (uracil(1939)-C(5))-methyltransferase RlmD (440 aa).

The 59-residue stretch at 6–64 (PIHNAQPEQVFIESLDTEGRGIARVEGKVLFVDGALPGERVWARRTQNHKSFDRAELLQ) folds into the TRAM domain. [4Fe-4S] cluster contacts are provided by C77, C83, C86, and C164. S-adenosyl-L-methionine contacts are provided by Q273, F302, N307, E323, D351, and D372. C397 serves as the catalytic Nucleophile.

It belongs to the class I-like SAM-binding methyltransferase superfamily. RNA M5U methyltransferase family. RlmD subfamily.

The catalysed reaction is uridine(1939) in 23S rRNA + S-adenosyl-L-methionine = 5-methyluridine(1939) in 23S rRNA + S-adenosyl-L-homocysteine + H(+). In terms of biological role, catalyzes the formation of 5-methyl-uridine at position 1939 (m5U1939) in 23S rRNA. The protein is 23S rRNA (uracil(1939)-C(5))-methyltransferase RlmD of Acidithiobacillus ferrooxidans (strain ATCC 23270 / DSM 14882 / CIP 104768 / NCIMB 8455) (Ferrobacillus ferrooxidans (strain ATCC 23270)).